Consider the following 195-residue polypeptide: Shikimate kinase (195 aa).

Glycine 30–alanine 35 serves as a coordination point for ATP. Threonine 34 lines the Mg(2+) pocket. Residues aspartate 52, arginine 76, and glycine 98 each coordinate substrate. ATP is bound at residue arginine 136. Arginine 155 contributes to the substrate binding site.

The protein belongs to the shikimate kinase family. Monomer. Requires Mg(2+) as cofactor.

It is found in the cytoplasm. It catalyses the reaction shikimate + ATP = 3-phosphoshikimate + ADP + H(+). It participates in metabolic intermediate biosynthesis; chorismate biosynthesis; chorismate from D-erythrose 4-phosphate and phosphoenolpyruvate: step 5/7. Its function is as follows. Catalyzes the specific phosphorylation of the 3-hydroxyl group of shikimic acid using ATP as a cosubstrate. The polypeptide is Shikimate kinase (Ruegeria pomeroyi (strain ATCC 700808 / DSM 15171 / DSS-3) (Silicibacter pomeroyi)).